The following is a 316-amino-acid chain: WSCD family member GA21586 (316 aa).

A helical membrane pass occupies residues 8 to 28; it reads FFGVSATIIIYIGGVLFLSMN. 4 N-linked (GlcNAc...) asparagine glycosylation sites follow: N78, N150, N226, and N232.

The protein belongs to the WSCD family.

It localises to the membrane. In Drosophila pseudoobscura pseudoobscura (Fruit fly), this protein is WSCD family member GA21586.